Consider the following 99-residue polypeptide: Nucleoid-associated protein SPy_1862/M5005_Spy1580 (99 aa).

The protein belongs to the YbaB/EbfC family. In terms of assembly, homodimer.

Its subcellular location is the cytoplasm. The protein localises to the nucleoid. In terms of biological role, binds to DNA and alters its conformation. May be involved in regulation of gene expression, nucleoid organization and DNA protection. The chain is Nucleoid-associated protein SPy_1862/M5005_Spy1580 from Streptococcus pyogenes serotype M1.